The chain runs to 137 residues: Putative pre-16S rRNA nuclease (137 aa).

This sequence belongs to the YqgF nuclease family.

The protein localises to the cytoplasm. Its function is as follows. Could be a nuclease involved in processing of the 5'-end of pre-16S rRNA. This chain is Putative pre-16S rRNA nuclease, found in Buchnera aphidicola subsp. Schizaphis graminum (strain Sg).